A 175-amino-acid polypeptide reads, in one-letter code: Peptide deformylase (175 aa).

Fe cation contacts are provided by Cys99 and His141. Glu142 is a catalytic residue. His145 is a Fe cation binding site.

The protein belongs to the polypeptide deformylase family. It depends on Fe(2+) as a cofactor.

It carries out the reaction N-terminal N-formyl-L-methionyl-[peptide] + H2O = N-terminal L-methionyl-[peptide] + formate. Its function is as follows. Removes the formyl group from the N-terminal Met of newly synthesized proteins. Requires at least a dipeptide for an efficient rate of reaction. N-terminal L-methionine is a prerequisite for activity but the enzyme has broad specificity at other positions. In Rickettsia canadensis (strain McKiel), this protein is Peptide deformylase.